Here is a 933-residue protein sequence, read N- to C-terminus: Bifunctional uridylyltransferase/uridylyl-removing enzyme (933 aa).

Residues 1 to 390 (MLSTRAASAD…RLAALARRKD (390 aa)) are uridylyltransferase. Residues 391-745 (VDGFVVDGER…TRIDRGRAIT (355 aa)) form a uridylyl-removing region. Residues 506-628 (VDEHTLFALG…VQSPERLRLL (123 aa)) form the HD domain. ACT domains are found at residues 746 to 829 (EVTI…DLTK) and 859 to 933 (VIEV…DPSA).

It belongs to the GlnD family. The cofactor is Mg(2+).

The catalysed reaction is [protein-PII]-L-tyrosine + UTP = [protein-PII]-uridylyl-L-tyrosine + diphosphate. The enzyme catalyses [protein-PII]-uridylyl-L-tyrosine + H2O = [protein-PII]-L-tyrosine + UMP + H(+). Uridylyltransferase (UTase) activity is inhibited by glutamine, while glutamine activates uridylyl-removing (UR) activity. Uridylylation process is dependent on ATP and 2-oxoglutarate, which are effector molecules that likely bind to PII proteins and control their activity. Functionally, modifies, by uridylylation and deuridylylation, the PII regulatory proteins GlnB and GlnZ, in response to the nitrogen status of the cell that GlnD senses through the glutamine level. Under low glutamine levels, catalyzes the conversion of the PII proteins and UTP to PII-UMP and PPi, while under higher glutamine levels, GlnD hydrolyzes PII-UMP to PII and UMP (deuridylylation). Thus, controls uridylylation state and activity of the PII proteins, and plays an important role in the regulation of nitrogen fixation and metabolism. The polypeptide is Bifunctional uridylyltransferase/uridylyl-removing enzyme (Azospirillum brasilense).